The chain runs to 4644 residues: Cytoplasmic dynein 1 heavy chain 1 (4644 aa).

S2 is subject to N-acetylserine. Residues 2 to 1865 (SEPGGGEDGS…SIQMANAKFN (1864 aa)) form a stem region. Coiled-coil stretches lie at residues 48 to 69 (AALEAALEEKSALEQMRKFLSD), 179 to 200 (SVEKKIAELEMGLLHLQQNIEI), 453 to 476 (AHRKLQARLDQMRKFRRQHEQLRA), and 541 to 564 (TEAWEAAMKRYDERIDRVETRITA). Phosphoserine is present on S68. Residues 446-701 (MVWRINPAHR…NTQEIFDDWA (256 aa)) are interaction with DYNC1I2. Residues 649–800 (AKQIDRQLTA…EKVEERNTIS (152 aa)) are interaction with DYNC1LI2. K1123 carries the post-translational modification N6-acetyllysine. The stretch at 1169 to 1201 (TYVQSLKRKIKQFEKQVELYRNGQRLLEKQRFQ) forms a coiled coil. A Phosphoserine modification is found at S1228. Coiled-coil stretches lie at residues 1229–1250 (AIQQQVANLQMKIVQEDRAVES) and 1355–1371 (RKLRQNLDGLLNQLKNF). AAA stretches follow at residues 1866–2097 (YGFE…VLVS), 2178–2450 (EELK…LTRL), 2554–2803 (EVET…WVRG), and 2897–3166 (VFYE…GGRT). ATP-binding positions include 1904–1911 (GPAGTGKT) and 2222–2229 (GPSGSGKS). Residues 2388–2408 (GEDEAQRRRKGKEDEGEEAAS) form a disordered region. ATP is bound by residues 2593-2600 (GPPGSGKT) and 2935-2942 (GVSGAGKT). Coiled-coil stretches lie at residues 3187-3273 (EKRS…ADKQ), 3394-3498 (AIAQ…KNQM), and 3735-3798 (EFQL…VSQQ). The stalk stretch occupies residues 3187–3498 (EKRSELEEQQ…KTSETFKNQM (312 aa)). N6-acetyllysine is present on K3478. AAA regions lie at residues 3551 to 3780 (LSNA…EVTR) and 4003 to 4219 (AHMF…TVDT). Residue S4160 is modified to Phosphoserine. An N6-acetyllysine modification is found at K4281. T4364 carries the post-translational modification Phosphothreonine. Residue S4366 is modified to Phosphoserine.

This sequence belongs to the dynein heavy chain family. As to quaternary structure, homodimer. The cytoplasmic dynein 1 complex consists of two catalytic heavy chains (HCs) and a number of non-catalytic subunits presented by intermediate chains (ICs), light intermediate chains (LICs) and light chains (LCs); the composition seems to vary in respect to the IC, LIC and LC composition. The heavy chain homodimer serves as a scaffold for the probable homodimeric assembly of the respective non-catalytic subunits. The ICs and LICs bind directly to the HC dimer and dynein LCs assemble on the IC dimer. Interacts with DYNC1LI1; DYNC1LI1 and DYNC1LI2 bind mutually exclusive to DYNC1H1. Interacts with DYNC1LI2; DYNC1LI1 and DYNC1LI2 bind mutually exclusive to DYNC1H1. Interacts with DYNC1I2. Interacts with BICD2. Interacts with DNALI1.

It is found in the cytoplasm. The protein resides in the cytoskeleton. Its function is as follows. Cytoplasmic dynein 1 acts as a motor for the intracellular retrograde motility of vesicles and organelles along microtubules. Dynein has ATPase activity; the force-producing power stroke is thought to occur on release of ADP. Plays a role in mitotic spindle assembly and metaphase plate congression. This Mus musculus (Mouse) protein is Cytoplasmic dynein 1 heavy chain 1 (Dync1h1).